We begin with the raw amino-acid sequence, 315 residues long: Aspartate carbamoyltransferase catalytic subunit (315 aa).

Carbamoyl phosphate contacts are provided by Arg-64 and Thr-65. Position 92 (Lys-92) interacts with L-aspartate. The carbamoyl phosphate site is built by Arg-114, His-142, and Gln-145. Positions 175 and 229 each coordinate L-aspartate. Gly-270 and Pro-271 together coordinate carbamoyl phosphate.

This sequence belongs to the aspartate/ornithine carbamoyltransferase superfamily. ATCase family. Heterododecamer (2C3:3R2) of six catalytic PyrB chains organized as two trimers (C3), and six regulatory PyrI chains organized as three dimers (R2).

The enzyme catalyses carbamoyl phosphate + L-aspartate = N-carbamoyl-L-aspartate + phosphate + H(+). The protein operates within pyrimidine metabolism; UMP biosynthesis via de novo pathway; (S)-dihydroorotate from bicarbonate: step 2/3. Its function is as follows. Catalyzes the condensation of carbamoyl phosphate and aspartate to form carbamoyl aspartate and inorganic phosphate, the committed step in the de novo pyrimidine nucleotide biosynthesis pathway. This chain is Aspartate carbamoyltransferase catalytic subunit, found in Methylorubrum populi (strain ATCC BAA-705 / NCIMB 13946 / BJ001) (Methylobacterium populi).